We begin with the raw amino-acid sequence, 170 residues long: ATP synthase subunit b (170 aa).

A helical membrane pass occupies residues Phe30–Pro50.

Belongs to the ATPase B chain family. As to quaternary structure, F-type ATPases have 2 components, F(1) - the catalytic core - and F(0) - the membrane proton channel. F(1) has five subunits: alpha(3), beta(3), gamma(1), delta(1), epsilon(1). F(0) has three main subunits: a(1), b(2) and c(10-14). The alpha and beta chains form an alternating ring which encloses part of the gamma chain. F(1) is attached to F(0) by a central stalk formed by the gamma and epsilon chains, while a peripheral stalk is formed by the delta and b chains.

The protein resides in the cell membrane. In terms of biological role, f(1)F(0) ATP synthase produces ATP from ADP in the presence of a proton or sodium gradient. F-type ATPases consist of two structural domains, F(1) containing the extramembraneous catalytic core and F(0) containing the membrane proton channel, linked together by a central stalk and a peripheral stalk. During catalysis, ATP synthesis in the catalytic domain of F(1) is coupled via a rotary mechanism of the central stalk subunits to proton translocation. Its function is as follows. Component of the F(0) channel, it forms part of the peripheral stalk, linking F(1) to F(0). In Mycobacterium leprae (strain TN), this protein is ATP synthase subunit b.